A 758-amino-acid polypeptide reads, in one-letter code: Spastin (758 aa).

The interval 1-103 (MVRTKNQSSS…SPRSGHHHSY (103 aa)) is disordered. Residues 1-121 (MVRTKNQSSS…KQNLYVVSFP (121 aa)) lie on the Cytoplasmic side of the membrane. The tract at residues 1-210 (MVRTKNQSSS…RPIQPLEMAA (210 aa)) is required for localization to punctate cytoplasmic foci. Composition is skewed to low complexity over residues 8 to 28 (SSSSSASSSSTKSPIKSSSGA), 43 to 58 (RSSSASNVAAVVAGGS), 66 to 76 (SSNRRSPGSSP), and 85 to 95 (TDDLTPTTCSP). The segment at residues 122-142 (IIFLFNVLRSLIYQLFCIFRY) is an intramembrane region (helical). At 143–758 (LYGASTKVIY…WSQDYGDITI (616 aa)) the chain is on the cytoplasmic side. 2 stretches are compositionally biased toward polar residues: residues 169-180 (SKEQQQSLNHPS) and 189-198 (QEQQLSNQPQ). The tract at residues 169-202 (SKEQQQSLNHPSELNREGDGQEQQLSNQPQRFRP) is disordered. Residues 208-758 (MAANRPGGGY…WSQDYGDITI (551 aa)) are sufficient for interaction with microtubules and microtubule severing. In terms of domain architecture, MIT spans 233-308 (HRRAFEYISK…SMARDRLHFL (76 aa)). Residues 353-454 (RVRSSGYGPK…GPSGSGASTP (102 aa)) are disordered. Composition is skewed to polar residues over residues 390-406 (NKSQTLPRNLGSKTSVG) and 425-454 (QFSSGRNTPPQRSRTPINNNGPSGSGASTP). The tract at residues 443–455 (NNGPSGSGASTPV) is required for interaction with microtubules. 523 to 530 (GPPGNGKT) is an ATP binding site.

This sequence belongs to the AAA ATPase family. Spastin subfamily. Homohexamer. The homohexamer is stabilized by ATP-binding. The homohexamer may adopt a ring conformation through which microtubules pass prior to being severed. Interacts with microtubules. Interacts with atl; may be involved in microtubule dynamics.

It localises to the membrane. The protein localises to the cytoplasm. Its subcellular location is the cytoskeleton. It is found in the microtubule organizing center. The protein resides in the centrosome. It localises to the chromosome. The protein localises to the lipid droplet. The enzyme catalyses n ATP + n H2O + a microtubule = n ADP + n phosphate + (n+1) alpha/beta tubulin heterodimers.. ATP-dependent microtubule severing protein. Stimulates microtubule minus-end depolymerization and poleward microtubule flux in the mitotic spindle. Regulates microtubule stability in the neuromuscular junction synapse. Involved in lipid metabolism by regulating the size and distribution of lipid droplets. Involved in axon regeneration by regulating microtubule severing. The chain is Spastin from Drosophila sechellia (Fruit fly).